The following is a 315-amino-acid chain: Rab effector Noc2 (315 aa).

The region spanning 41–158 (QRRKQHLSPA…KRSGAWFYKG (118 aa)) is the RabBD domain. The FYVE-type zinc finger occupies 89–146 (GNGLSQCLLCGEVLGFLGSSSVFCKDCRKKVCTKCGIEASPGQKRPLWLCKICSEQRE). Zn(2+)-binding residues include C95, C98, C112, C115, C120, C123, C138, and C141. The disordered stretch occupies residues 170-315 (GRADDPHFRP…APAGPSSCLG (146 aa)). Composition is skewed to basic and acidic residues over residues 184 to 193 (PAEREPRSSE) and 221 to 240 (LEDRLPSTGVRDRKGDKPWK). A compositionally biased stretch (polar residues) spans 262–275 (GCQSSLASGETGTG). Residues 298–315 (GRAPAADAAPAGPSSCLG) are compositionally biased toward low complexity.

In terms of assembly, recruited to dense-core vesicles through specific interaction with RAB27A in endocrine cells. Interacts with RAB3A, RAB3B, RAB3C and RAB3D. Interacts with ZYX. As to expression, moderate to high levels of expression in thyroid, ovary, stomach, heart, pancreas, skeletal muscle, kidney and liver. Also detected in epithelial cells.

Its subcellular location is the cytoplasm. The protein resides in the cytoplasmic vesicle. The protein localises to the secretory vesicle membrane. Functionally, rab GTPase effector involved in the late steps of regulated exocytosis, both in endocrine and exocrine cells. Acts as a potential RAB3B effector protein in epithelial cells. This is Rab effector Noc2 (RPH3AL) from Homo sapiens (Human).